Here is a 631-residue protein sequence, read N- to C-terminus: Transcription factor dibT (631 aa).

Residues 11–38 (CWTCRLRRKRCDSVQPVCGSCQSLEITC) constitute a DNA-binding region (zn(2)-C6 fungal-type). The segment covering 123-144 (SLADSSASTPSTSSGRPTTLRS) has biased composition (low complexity). Disordered stretches follow at residues 123 to 148 (SLAD…SVDR) and 469 to 488 (GLKD…TSAG).

It is found in the nucleus. Transcription factor; part of the gene cluster that mediates the biosynthesis of pestalotiollide B which is part of dibenzodioxocinones, a novel class of inhibitors against cholesterol ester transfer protein (CEPT). Acts as the key transcription factor within the cluster and positively regulates the expression of the cluster genes and the subsequent production of dibenzodioxocinones such as pestalotiollide B, pestalotiollide C, 1',2'-dehydropenicillide, 3'-methoxy-1',2'-dehydropenicillide and 1',2'-epoxy-3',4'-didehydropenicillide. Required for the expression of most PKS genes outside of the dibenzodioxocinones cluster, (43 out of 48 defined PKS genes), and promotes pigmentation of the mycelium and conidia. This Pestalotiopsis microspora protein is Transcription factor dibT.